The chain runs to 553 residues: Dihydroxy-acid dehydratase 1 (553 aa).

Aspartate 78 serves as a coordination point for Mg(2+). A [2Fe-2S] cluster-binding site is contributed by cysteine 119. The Mg(2+) site is built by aspartate 120 and lysine 121. N6-carboxylysine is present on lysine 121. Cysteine 191 provides a ligand contact to [2Fe-2S] cluster. Glutamate 444 is a Mg(2+) binding site. Serine 470 acts as the Proton acceptor in catalysis.

The protein belongs to the IlvD/Edd family. In terms of assembly, homodimer. It depends on [2Fe-2S] cluster as a cofactor. Requires Mg(2+) as cofactor.

It catalyses the reaction (2R)-2,3-dihydroxy-3-methylbutanoate = 3-methyl-2-oxobutanoate + H2O. The enzyme catalyses (2R,3R)-2,3-dihydroxy-3-methylpentanoate = (S)-3-methyl-2-oxopentanoate + H2O. It functions in the pathway amino-acid biosynthesis; L-isoleucine biosynthesis; L-isoleucine from 2-oxobutanoate: step 3/4. Its pathway is amino-acid biosynthesis; L-valine biosynthesis; L-valine from pyruvate: step 3/4. Functionally, functions in the biosynthesis of branched-chain amino acids. Catalyzes the dehydration of (2R,3R)-2,3-dihydroxy-3-methylpentanoate (2,3-dihydroxy-3-methylvalerate) into 2-oxo-3-methylpentanoate (2-oxo-3-methylvalerate) and of (2R)-2,3-dihydroxy-3-methylbutanoate (2,3-dihydroxyisovalerate) into 2-oxo-3-methylbutanoate (2-oxoisovalerate), the penultimate precursor to L-isoleucine and L-valine, respectively. The protein is Dihydroxy-acid dehydratase 1 of Methanosarcina acetivorans (strain ATCC 35395 / DSM 2834 / JCM 12185 / C2A).